Reading from the N-terminus, the 823-residue chain is NAD-dependent histone deacetylase sirtuin-1 (823 aa).

The span at 41–67 (LASTSTEAEAEAEATATTTEPATSELA) shows a compositional bias: low complexity. The interval 41–146 (LASTSTEAEA…SSSNCSSSVE (106 aa)) is disordered. The span at 72–95 (GEIKTKTLAAREEQEIGANLEHKT) shows a compositional bias: basic and acidic residues. Acidic residues predominate over residues 104 to 137 (EDEDDEEEEEEDDEEEEEDDEEGITGTSNEDEDS). Residues 204 to 499 (KLASVNTFDD…LCCDESVLTE (296 aa)) form the Deacetylase sirtuin-type domain. NAD(+) contacts are provided by residues 229–248 (GAGV…NGIY) and 313–316 (QNID). His331 serves as the catalytic Proton acceptor. Positions 339, 342, 363, and 366 each coordinate Zn(2+). NAD(+) contacts are provided by residues 427 to 429 (GSS), 452 to 454 (NRE), and Ser469. Residues Ser618 and Ser621 each carry the phosphoserine modification. Over residues 698–707 (DYSDDDDEEE) the composition is skewed to acidic residues. Disordered regions lie at residues 698-722 (DYSD…GNVG) and 777-823 (IIEQ…LAAV). The segment covering 798–813 (PSEENKQQTQIERSEE) has biased composition (basic and acidic residues). The span at 814-823 (SPPPGQLAAV) shows a compositional bias: pro residues.

Belongs to the sirtuin family. Class I subfamily. In terms of assembly, interacts with the transcriptional repressors hairy (hry) and deadpan (dpn); via basic domains. Associates with the Esc/E(z) histone methyltransferase complex. Interacts directly with E(z) and HDAC1/Rpd3. Zn(2+) is required as a cofactor.

Its subcellular location is the cytoplasm. It localises to the nucleus. The protein resides in the chromosome. It carries out the reaction N(6)-acetyl-L-lysyl-[protein] + NAD(+) + H2O = 2''-O-acetyl-ADP-D-ribose + nicotinamide + L-lysyl-[protein]. In terms of biological role, NAD-dependent histone deacetylase involved in heterochromatic silencing. Mildly suppresses the heterochromatin-mediated silencing phenomenon known as position-effect variegation (PEV). Required for epigenetic silencing of the polycomb group proteins. Has histone H4 deacetylase activity in vitro. Required maternally for establishing proper segmentation of the embryo. Involved in sex determination. May be involved in the regulation of life span. The protein is NAD-dependent histone deacetylase sirtuin-1 of Drosophila melanogaster (Fruit fly).